The chain runs to 394 residues: Elongation factor Tu (394 aa).

In terms of domain architecture, tr-type G spans 10–204 (KPHVNIGTIG…AVDSYIPQPV (195 aa)). The interval 19–26 (GHVDHGKT) is G1. 19–26 (GHVDHGKT) provides a ligand contact to GTP. T26 serves as a coordination point for Mg(2+). The interval 60–64 (GITIS) is G2. Residues 81–84 (DCPG) form a G3 region. GTP contacts are provided by residues 81–85 (DCPGH) and 136–139 (NKID). The G4 stretch occupies residues 136-139 (NKID). The G5 stretch occupies residues 174–176 (SAL).

It belongs to the TRAFAC class translation factor GTPase superfamily. Classic translation factor GTPase family. EF-Tu/EF-1A subfamily. Monomer.

It is found in the cytoplasm. The enzyme catalyses GTP + H2O = GDP + phosphate + H(+). Its function is as follows. GTP hydrolase that promotes the GTP-dependent binding of aminoacyl-tRNA to the A-site of ribosomes during protein biosynthesis. This chain is Elongation factor Tu, found in Rickettsia rickettsii.